Consider the following 438-residue polypeptide: Carboxypeptidase A6 (438 aa).

Positions 1–30 are cleaved as a signal peptide; the sequence is MNFLGNPRSHTAAFLPVCWLLLNILKPGHC. Positions 31 to 129 are cleaved as a propeptide — activation peptide; it reads HSYDNRYAGD…NSLQTQRNRR (99 aa). N-linked (GlcNAc...) asparagine glycosylation is found at Asn-89 and Asn-153. Residues 138–433 enclose the Peptidase M14 domain; it reads VYHSLEDIQS…LAVKNITMHL (296 aa). The Zn(2+) site is built by His-197 and Glu-200. Residues 197–200, Arg-255, and 272–273 each bind substrate; these read HARE and NR. A disulfide bridge links Cys-266 with Cys-289. A Zn(2+)-binding site is contributed by His-325. 326-327 serves as a coordination point for substrate; the sequence is AY. N-linked (GlcNAc...) asparagine glycosylation is present at Asn-344. Tyr-377 lines the substrate pocket. Glu-399 acts as the Proton donor/acceptor in catalysis. Residue Asn-428 is glycosylated (N-linked (GlcNAc...) asparagine).

This sequence belongs to the peptidase M14 family. Requires Zn(2+) as cofactor. In brain, highly expressed in the olfactory bulb with lower levels in other regions including cerebral cortex, hippocampus, hypothalamus, striatum and medulla. Within the olfactory bulb, highest levels occur in the mitral and granular layers with lower levels in the internal and external plexiform layers. Moderate levels are found in the epididymis with low levels in colon and spleen. Not detected in adrenal, liver, lung, ovary or testis. At embryonic day 14.5, enriched in eye, ear, osteoblasts, stomach, skin, dorsal root ganglia and throughout the CNS.

The protein localises to the secreted. It localises to the extracellular space. The protein resides in the extracellular matrix. In terms of biological role, may be involved in the proteolytic inactivation of enkephalins and neurotensin in some brain areas. May convert inactive angiotensin I into the biologically active angiotensin II. Releases a C-terminal amino acid, with preference for large hydrophobic C-terminal amino acids and shows only very weak activity toward small amino acids and histidine. This Mus musculus (Mouse) protein is Carboxypeptidase A6 (Cpa6).